The primary structure comprises 516 residues: Glucose-6-phosphate 1-dehydrogenase 5, cytoplasmic (516 aa).

NADP(+) contacts are provided by residues 38-45, arginine 73, tyrosine 156, and lysine 183; that span reads GASGDLAK. Residues lysine 183, 213 to 217, glutamate 251, and aspartate 270 contribute to the D-glucose 6-phosphate site; that span reads HYLGK. Catalysis depends on histidine 275, which acts as the Proton acceptor. NADP(+) is bound at residue lysine 358. D-glucose 6-phosphate-binding residues include lysine 361 and lysine 366. NADP(+) is bound by residues lysine 367, arginine 371, and arginine 395. A D-glucose 6-phosphate-binding site is contributed by glutamine 397. NADP(+)-binding positions include 403 to 405, 423 to 425, arginine 489, and tryptophan 511; these read YMK and DLS.

This sequence belongs to the glucose-6-phosphate dehydrogenase family. Forms homodimer. As to expression, expressed in leaves and stems.

Its subcellular location is the cytoplasm. The protein resides in the cytosol. It catalyses the reaction D-glucose 6-phosphate + NADP(+) = 6-phospho-D-glucono-1,5-lactone + NADPH + H(+). The protein operates within carbohydrate degradation; pentose phosphate pathway; D-ribulose 5-phosphate from D-glucose 6-phosphate (oxidative stage): step 1/3. Its activity is regulated as follows. Regulated by metabolites. Catalyzes the rate-limiting step of the oxidative pentose-phosphate pathway, which represents a route for the dissimilation of carbohydrates besides glycolysis. The main function of this enzyme is to provide reducing power (NADPH) and pentose phosphates for fatty acid and nucleic acid synthesis which are involved in membrane synthesis and cell division. This is Glucose-6-phosphate 1-dehydrogenase 5, cytoplasmic from Arabidopsis thaliana (Mouse-ear cress).